The sequence spans 127 residues: uncharacterized protein (127 aa).

The helical transmembrane segment at 12–32 threads the bilayer; the sequence is FFFLILFYFCIISSFLFLFIF.

The protein localises to the membrane. This is an uncharacterized protein from Saccharomyces cerevisiae (strain ATCC 204508 / S288c) (Baker's yeast).